A 462-amino-acid polypeptide reads, in one-letter code: Argininosuccinate lyase (462 aa).

It belongs to the lyase 1 family. Argininosuccinate lyase subfamily.

The protein localises to the cytoplasm. It catalyses the reaction 2-(N(omega)-L-arginino)succinate = fumarate + L-arginine. It participates in amino-acid biosynthesis; L-arginine biosynthesis; L-arginine from L-ornithine and carbamoyl phosphate: step 3/3. The protein is Argininosuccinate lyase of Lachnoclostridium phytofermentans (strain ATCC 700394 / DSM 18823 / ISDg) (Clostridium phytofermentans).